The following is a 138-amino-acid chain: Translation initiation factor 2 subunit beta (138 aa).

This sequence belongs to the eIF-2-beta/eIF-5 family. As to quaternary structure, heterotrimer composed of an alpha, a beta and a gamma chain.

EIF-2 functions in the early steps of protein synthesis by forming a ternary complex with GTP and initiator tRNA. This Methanococcus maripaludis (strain C5 / ATCC BAA-1333) protein is Translation initiation factor 2 subunit beta.